Here is a 285-residue protein sequence, read N- to C-terminus: 2-dehydro-3-deoxyphosphooctonate aldolase (285 aa).

This sequence belongs to the KdsA family.

It is found in the cytoplasm. It catalyses the reaction D-arabinose 5-phosphate + phosphoenolpyruvate + H2O = 3-deoxy-alpha-D-manno-2-octulosonate-8-phosphate + phosphate. Its pathway is carbohydrate biosynthesis; 3-deoxy-D-manno-octulosonate biosynthesis; 3-deoxy-D-manno-octulosonate from D-ribulose 5-phosphate: step 2/3. The protein operates within bacterial outer membrane biogenesis; lipopolysaccharide biosynthesis. This chain is 2-dehydro-3-deoxyphosphooctonate aldolase, found in Acinetobacter baylyi (strain ATCC 33305 / BD413 / ADP1).